Here is a 290-residue protein sequence, read N- to C-terminus: Phosphatidylglycerol--prolipoprotein diacylglyceryl transferase (290 aa).

Transmembrane regions (helical) follow at residues 21 to 41, 60 to 80, 96 to 116, 124 to 144, 199 to 219, 226 to 246, and 260 to 280; these read VSLHWYGLMYLVGFVFAMWLA, LLYAGFLGVFIGGRVGYVLFY, WDGGMSFHGGLIGVICVMLWF, FFQVADFIAPLIPFGLGAGRL, SQLYEMILEGVVLFIILNVFI, GSVSGLFLIGYGTFRIIVECF, and ISMGQILSVPMILAGIIMMIW. Residue R143 participates in a 1,2-diacyl-sn-glycero-3-phospho-(1'-sn-glycerol) binding.

This sequence belongs to the Lgt family.

It localises to the cell inner membrane. The catalysed reaction is L-cysteinyl-[prolipoprotein] + a 1,2-diacyl-sn-glycero-3-phospho-(1'-sn-glycerol) = an S-1,2-diacyl-sn-glyceryl-L-cysteinyl-[prolipoprotein] + sn-glycerol 1-phosphate + H(+). The protein operates within protein modification; lipoprotein biosynthesis (diacylglyceryl transfer). Catalyzes the transfer of the diacylglyceryl group from phosphatidylglycerol to the sulfhydryl group of the N-terminal cysteine of a prolipoprotein, the first step in the formation of mature lipoproteins. The chain is Phosphatidylglycerol--prolipoprotein diacylglyceryl transferase from Yersinia pseudotuberculosis serotype O:1b (strain IP 31758).